The following is a 231-amino-acid chain: Tegument protein UL51 homolog (231 aa).

C12 is lipidated: S-palmitoyl cysteine; by host.

The protein belongs to the herpesviridae UL51 family. In terms of assembly, oligomerizes. Interacts with U75; this interaction mediates U75 incorporation to virions. Phosphorylated. Post-translationally, palmitoylation is necessary for Golgi localization.

Its subcellular location is the virion tegument. The protein localises to the host cytoplasm. It localises to the host Golgi apparatus. Its function is as follows. Plays several roles during the time course of infection, including egress of virus particles from the perinuclear space and secondary envelopment of cytoplasmic capsids that bud into specific trans-Golgi network (TGN)-derived membranes. This is Tegument protein UL51 homolog (U44) from Human herpesvirus 6B (strain Z29) (HHV-6 variant B).